The following is a 317-amino-acid chain: Ret finger protein-like 3 (317 aa).

An RING-type zinc finger spans residues 40 to 82; the sequence is CPVCSDYLEKPMSLECGCTVCLKCINSLQKEPHGEDLLCCCCS. The 195-residue stretch at 107-301 folds into the B30.2/SPRY domain; the sequence is EPKLKKILQM…DQGVLSICPL (195 aa).

In terms of tissue distribution, expressed during neurogenesis in differentiating human embryonic stem cells and in the developing human neocortex.

Its subcellular location is the cytoplasm. The protein resides in the nucleus. Functionally, (Microbial infection) Stimulates the activity of Human Immunodeficiency Virus 1/HIV-1 pre-integration complex. The protein is Ret finger protein-like 3 (RFPL3) of Homo sapiens (Human).